Consider the following 454-residue polypeptide: Glutamine synthetase (454 aa).

Residues 19–111 enclose the GS beta-grasp domain; that stretch reads NNVKFIRFQF…VICDVYKDEK (93 aa). The region spanning 118–454 is the GS catalytic domain; it reads PRSRLKAILE…DWETGKYLIY (337 aa). Residues Glu-142 and Glu-144 each coordinate Mg(2+). Glu-194 is a binding site for ATP. 2 residues coordinate Mg(2+): Glu-199 and Glu-206. L-glutamate-binding positions include 250–251 and Gly-251; that span reads NG. His-255 contacts Mg(2+). Residues 257–259 and Ser-259 contribute to the ATP site; that span reads HQS. Residues Arg-309, Glu-315, and Arg-327 each contribute to the L-glutamate site. ATP-binding residues include Arg-327, Arg-332, and Lys-339. Glu-344 serves as a coordination point for Mg(2+). Arg-346 lines the L-glutamate pocket.

Belongs to the glutamine synthetase family. As to quaternary structure, oligomer of 12 subunits arranged in the form of two hexagons. Mg(2+) serves as cofactor.

It is found in the cytoplasm. The enzyme catalyses L-glutamate + NH4(+) + ATP = L-glutamine + ADP + phosphate + H(+). With respect to regulation, feedback inhibited by glycine and alanine, and inhibited by low concentrations of methionine sulfoximine. Its function is as follows. Probably involved in nitrogen metabolism via ammonium assimilation. Catalyzes the ATP-dependent biosynthesis of glutamine from glutamate and ammonia. Beta-glutamate is a much poorer substrate than alpha-glutamate. This is Glutamine synthetase from Methanocaldococcus jannaschii (strain ATCC 43067 / DSM 2661 / JAL-1 / JCM 10045 / NBRC 100440) (Methanococcus jannaschii).